A 599-amino-acid chain; its full sequence is Sulfite reductase [NADPH] flavoprotein alpha-component (599 aa).

Residues Ile64–Val202 form the Flavodoxin-like domain. FMN contacts are provided by residues Ser70–Ala75, Ser117–Gly120, and Leu153–Cys162. An FAD-binding FR-type domain is found at Asp234–Pro448. Residues Thr322, Ala356, Arg386 to Ser389, Thr404 to Gly406, Tyr410, and Gly419 to Ser422 contribute to the FAD site. Residues Ser519–Arg520, Lys525–Gln529, and Asp561 contribute to the NADP(+) site. Residue Tyr599 participates in FAD binding.

This sequence belongs to the NADPH-dependent sulphite reductase flavoprotein subunit CysJ family. In the N-terminal section; belongs to the flavodoxin family. It in the C-terminal section; belongs to the flavoprotein pyridine nucleotide cytochrome reductase family. Alpha(8)-beta(8). The alpha component is a flavoprotein, the beta component is a hemoprotein. The cofactor is FAD. Requires FMN as cofactor.

The enzyme catalyses hydrogen sulfide + 3 NADP(+) + 3 H2O = sulfite + 3 NADPH + 4 H(+). Its pathway is sulfur metabolism; hydrogen sulfide biosynthesis; hydrogen sulfide from sulfite (NADPH route): step 1/1. Its function is as follows. Component of the sulfite reductase complex that catalyzes the 6-electron reduction of sulfite to sulfide. This is one of several activities required for the biosynthesis of L-cysteine from sulfate. The flavoprotein component catalyzes the electron flow from NADPH -&gt; FAD -&gt; FMN to the hemoprotein component. This Escherichia coli (strain ATCC 8739 / DSM 1576 / NBRC 3972 / NCIMB 8545 / WDCM 00012 / Crooks) protein is Sulfite reductase [NADPH] flavoprotein alpha-component.